The primary structure comprises 389 residues: Capreomycidine synthase (389 aa).

An N6-(pyridoxal phosphate)lysine modification is found at lysine 230.

The protein belongs to the class-II pyridoxal-phosphate-dependent aminotransferase family. Requires pyridoxal 5'-phosphate as cofactor.

The catalysed reaction is (2S,3S)-hydroxyarginine = (2S,3R)-capreomycidine + H2O. It participates in antibiotic biosynthesis. In terms of biological role, involved in the biosynthesis of capreomycidine, an unusual amino acid used by non-ribosomal peptide synthases (NRPS) to make the tuberactinomycin class of peptide antibiotic such as viomycin and capreomycin. Catalyzes the dehydration of the C3 hydroxyl of (3S)-hydroxy-(2S)-arginine and the intramolecular cyclization to yield (2S,3R)-capreomycidine. This chain is Capreomycidine synthase, found in Streptomyces vinaceus.